Reading from the N-terminus, the 173-residue chain is Peptide deformylase (173 aa).

Residues Cys98 and His140 each contribute to the Fe cation site. The active site involves Glu141. His144 provides a ligand contact to Fe cation.

The protein belongs to the polypeptide deformylase family. Requires Fe(2+) as cofactor.

It carries out the reaction N-terminal N-formyl-L-methionyl-[peptide] + H2O = N-terminal L-methionyl-[peptide] + formate. Its function is as follows. Removes the formyl group from the N-terminal Met of newly synthesized proteins. Requires at least a dipeptide for an efficient rate of reaction. N-terminal L-methionine is a prerequisite for activity but the enzyme has broad specificity at other positions. In Caulobacter vibrioides (strain ATCC 19089 / CIP 103742 / CB 15) (Caulobacter crescentus), this protein is Peptide deformylase.